We begin with the raw amino-acid sequence, 266 residues long: Killer cell lectin-like receptor 3 (266 aa).

The Cytoplasmic segment spans residues 1-48 (MSEPEVTYSTVRLHKSSGLQKLVRHEETQGPREVGNRKCSAPWQLIVK). A helical; Signal-anchor for type II membrane protein transmembrane segment spans residues 49 to 69 (ALGILCFLLLVTVAVLAVKIF). Over 70 to 266 (QYNQHKQEIN…CGKKLDKFPD (197 aa)) the chain is Extracellular. Asparagine 79, asparagine 87, asparagine 104, and asparagine 113 each carry an N-linked (GlcNAc...) asparagine glycan. Positions 147–151 (WFCYS) are involved in dimerization. A disulfide bridge connects residues cysteine 149 and cysteine 154. The 109-residue stretch at 150–258 (YSTKCYYFIM…CNIPYYCICG (109 aa)) folds into the C-type lectin domain. N-linked (GlcNAc...) asparagine glycosylation occurs at asparagine 160. Implicated in MHC class I binding regions lie at residues 160–162 (NKT), 195–196 (IP), 207–208 (KK), 224–233 (MKIRKMNFKS), and 240–245 (SKARIE). Intrachain disulfides connect cysteine 167/cysteine 255, cysteine 171/cysteine 257, and cysteine 236/cysteine 249.

Homodimer; disulfide-linked.

It is found in the membrane. Functionally, receptor on natural killer (NK) cells for class I MHC. This Mus musculus (Mouse) protein is Killer cell lectin-like receptor 3 (Klra3).